A 589-amino-acid chain; its full sequence is ATP-dependent lipid A-core flippase (589 aa).

5 helical membrane-spanning segments follow: residues 29–49, 68–88, 157–177, 254–274, and 283–303; these read WLLVVAACGALLEAVAGSTFL, ALWLPLGIVGLFLLRGIAGYI, VIGALVVMLWYSWTVTLAILL, LSSAAVQLLGAVGLAMLLLIA, and LSPGDFVSLMTSMIAVIPALK. One can recognise an ABC transmembrane type-1 domain in the interval 32-314; it reads VVAACGALLE…LTNVQNMLQS (283 aa). The ABC transporter domain occupies 346 to 582; sequence IEFRGITARY…DGLYAYLYSM (237 aa). 380-387 provides a ligand contact to ATP; sequence GRSGSGKS.

The protein belongs to the ABC transporter superfamily. Lipid exporter (TC 3.A.1.106) family. In terms of assembly, homodimer.

It localises to the cell inner membrane. The catalysed reaction is ATP + H2O + lipid A-core oligosaccharideSide 1 = ADP + phosphate + lipid A-core oligosaccharideSide 2.. Its function is as follows. Involved in lipopolysaccharide (LPS) biosynthesis. Translocates lipid A-core from the inner to the outer leaflet of the inner membrane. Transmembrane domains (TMD) form a pore in the inner membrane and the ATP-binding domain (NBD) is responsible for energy generation. The sequence is that of ATP-dependent lipid A-core flippase from Xylella fastidiosa (strain 9a5c).